The primary structure comprises 471 residues: Trigger factor (471 aa).

In terms of domain architecture, PPIase FKBP-type spans Asp166 to Pro245. The disordered stretch occupies residues Ala442–Phe471. Positions Gly447–Glu456 are enriched in acidic residues.

Belongs to the FKBP-type PPIase family. Tig subfamily.

It is found in the cytoplasm. The enzyme catalyses [protein]-peptidylproline (omega=180) = [protein]-peptidylproline (omega=0). In terms of biological role, involved in protein export. Acts as a chaperone by maintaining the newly synthesized protein in an open conformation. Functions as a peptidyl-prolyl cis-trans isomerase. This is Trigger factor from Renibacterium salmoninarum (strain ATCC 33209 / DSM 20767 / JCM 11484 / NBRC 15589 / NCIMB 2235).